A 361-amino-acid chain; its full sequence is FK506-binding protein 39 kDa (361 aa).

The interval 122–256 is disordered; sequence LVDEEDEEEE…PSSPKTRTLK (135 aa). Acidic residues predominate over residues 123–174; sequence VDEEDEEEEESDEDYDLSPTEEDLVETVSGDEESEEESESEDNSASEEDELD. S192 bears the Phosphoserine mark. Positions 208–227 are enriched in basic and acidic residues; the sequence is QKVEGTPVKEKKVAFAEKLE. Residue T213 is modified to Phosphothreonine. Polar residues predominate over residues 241 to 252; sequence QASSNAPSSPKT. Phosphoserine is present on S249. One can recognise a PPIase FKBP-type domain in the interval 275–361; sequence GKKVEMRYIG…VFEVKLVRVH (87 aa).

The protein belongs to the FKBP-type PPIase family. FKBP3/4 subfamily.

The protein localises to the nucleus. It is found in the nucleolus. The catalysed reaction is [protein]-peptidylproline (omega=180) = [protein]-peptidylproline (omega=0). In terms of biological role, PPIase that acts as a histone chaperone. Histone proline isomerase that increases the rate of cis-trans isomerization at prolines on the histone H3 N-terminal tail. Proline isomerization influences H3 methylation thereby regulating gene expression. This chain is FK506-binding protein 39 kDa, found in Schizosaccharomyces pombe (strain 972 / ATCC 24843) (Fission yeast).